The chain runs to 635 residues: DNA-directed RNA polymerase subunit gamma (635 aa).

Positions 74, 76, 89, and 92 each coordinate Zn(2+). Residues Asp471, Asp473, and Asp475 each coordinate Mg(2+).

This sequence belongs to the RNA polymerase beta' chain family. RpoC1 subfamily. As to quaternary structure, in cyanobacteria the RNAP catalytic core is composed of 2 alpha, 1 beta, 1 beta', 1 gamma and 1 omega subunit. When a sigma factor is associated with the core the holoenzyme is formed, which can initiate transcription. Requires Mg(2+) as cofactor. The cofactor is Zn(2+).

The catalysed reaction is RNA(n) + a ribonucleoside 5'-triphosphate = RNA(n+1) + diphosphate. DNA-dependent RNA polymerase catalyzes the transcription of DNA into RNA using the four ribonucleoside triphosphates as substrates. This Prochlorococcus marinus (strain NATL1A) protein is DNA-directed RNA polymerase subunit gamma.